Reading from the N-terminus, the 196-residue chain is Large ribosomal subunit protein mL66 (196 aa).

Residues 1 to 34 (MAALNVLVSGCGRFLRGLLTGPTVTSWARPPARG) constitute a mitochondrion transit peptide.

Belongs to the bacterial ribosomal protein bS18 family. Mitochondrion-specific ribosomal protein mL66 subfamily. As to quaternary structure, component of the mitochondrial ribosome small subunit (28S) which comprises a 12S rRNA and about 30 distinct proteins.

It localises to the mitochondrion. In Bos taurus (Bovine), this protein is Large ribosomal subunit protein mL66 (MRPS18A).